Reading from the N-terminus, the 198-residue chain is Dephospho-CoA kinase (198 aa).

The region spanning 2 to 90 (LIAIVGKPGV…KLSLVTKPLL (89 aa)) is the DPCK domain. 10-15 (GVGKTS) lines the ATP pocket.

This sequence belongs to the CoaE family.

Its subcellular location is the cytoplasm. The catalysed reaction is 3'-dephospho-CoA + ATP = ADP + CoA + H(+). The protein operates within cofactor biosynthesis; coenzyme A biosynthesis; CoA from (R)-pantothenate: step 5/5. Its function is as follows. Catalyzes the phosphorylation of the 3'-hydroxyl group of dephosphocoenzyme A to form coenzyme A. The sequence is that of Dephospho-CoA kinase from Mycoplasma genitalium (strain ATCC 33530 / DSM 19775 / NCTC 10195 / G37) (Mycoplasmoides genitalium).